We begin with the raw amino-acid sequence, 435 residues long: Type A flavoprotein fprA (435 aa).

The tract at residues 48–228 (ANGTTYNAYA…PFRSFVAQAL (181 aa)) is zinc metallo-hydrolase. 6 residues coordinate Fe cation: H98, E100, D102, H167, D186, and H243. Residues 276-415 (LLIFYVSAYG…EGRAFGRRLA (140 aa)) form the Flavodoxin-like domain.

The protein in the N-terminal section; belongs to the zinc metallo-hydrolase group 3 family. In terms of assembly, homodimer. Requires FMN as cofactor. It depends on Fe cation as a cofactor.

Its function is as follows. Low-potential electron donor to a number of redox enzymes. The protein is Type A flavoprotein fprA (fprA) of Rhodobacter capsulatus (strain ATCC BAA-309 / NBRC 16581 / SB1003).